Reading from the N-terminus, the 138-residue chain is Acidic phospholipase A2 Ts-A6 (138 aa).

The signal sequence occupies residues 1-16 (MRALWIMAVLLLGVEG). Disulfide bonds link Cys-42–Cys-131, Cys-44–Cys-60, Cys-59–Cys-111, Cys-65–Cys-138, Cys-66–Cys-104, Cys-73–Cys-97, and Cys-91–Cys-102. Tyr-43, Gly-45, and Gly-47 together coordinate Ca(2+). His-63 is an active-site residue. Asp-64 is a binding site for Ca(2+). The active site involves Asp-105.

The cofactor is Ca(2+). Expressed by the venom gland.

Its subcellular location is the secreted. It catalyses the reaction a 1,2-diacyl-sn-glycero-3-phosphocholine + H2O = a 1-acyl-sn-glycero-3-phosphocholine + a fatty acid + H(+). Snake venom phospholipase A2 (PLA2) that shows a moderate inhibition of ADP-induced human platelet aggregation when tested on platelet rich plasma. Exhibits high hydrolytic activities and prefers the anionic micelles (dPPC with deoxycholate) to the zwitterionic micelles (dPPC with Triton X-100). PLA2 catalyzes the calcium-dependent hydrolysis of the 2-acyl groups in 3-sn-phosphoglycerides. The polypeptide is Acidic phospholipase A2 Ts-A6 (Trimeresurus stejnegeri (Chinese green tree viper)).